Consider the following 231-residue polypeptide: Heptaprenylglyceryl phosphate synthase (231 aa).

Lys12 is a sn-glycerol 1-phosphate binding site. Mg(2+)-binding residues include Asp14 and Thr40. Residues 159–164 (YMEYSG), Gly189, and 209–210 (GN) each bind sn-glycerol 1-phosphate.

This sequence belongs to the GGGP/HepGP synthase family. Group I subfamily. In terms of assembly, homodimer. It depends on Mg(2+) as a cofactor.

It catalyses the reaction sn-glycerol 1-phosphate + all-trans-heptaprenyl diphosphate = 3-heptaprenyl-sn-glycero-1-phosphate + diphosphate. Its pathway is membrane lipid metabolism; glycerophospholipid metabolism. Functionally, prenyltransferase that catalyzes in vivo the transfer of the heptaprenyl moiety of heptaprenyl pyrophosphate (HepPP; 35 carbon atoms) to the C3 hydroxyl of sn-glycerol-1-phosphate (G1P), producing heptaprenylglyceryl phosphate (HepGP). This reaction is an ether-bond-formation step in the biosynthesis of archaea-type G1P-based membrane lipids found in Bacillales. This chain is Heptaprenylglyceryl phosphate synthase, found in Brevibacillus brevis (strain 47 / JCM 6285 / NBRC 100599).